The primary structure comprises 365 residues: NAD(P)H-quinone oxidoreductase subunit 1, chloroplastic (365 aa).

6 helical membrane-spanning segments follow: residues 32–52 (LFPI…IVWL), 98–118 (YLFS…YLII), 129–149 (LSIG…GLLM), 257–279 (LFYV…LYLG), 302–322 (VFGT…FLFI), and 338–358 (LLNL…LLTT).

The protein belongs to the complex I subunit 1 family. NDH is composed of at least 16 different subunits, 5 of which are encoded in the nucleus.

It is found in the plastid. It localises to the chloroplast thylakoid membrane. The catalysed reaction is a plastoquinone + NADH + (n+1) H(+)(in) = a plastoquinol + NAD(+) + n H(+)(out). The enzyme catalyses a plastoquinone + NADPH + (n+1) H(+)(in) = a plastoquinol + NADP(+) + n H(+)(out). Its function is as follows. NDH shuttles electrons from NAD(P)H:plastoquinone, via FMN and iron-sulfur (Fe-S) centers, to quinones in the photosynthetic chain and possibly in a chloroplast respiratory chain. The immediate electron acceptor for the enzyme in this species is believed to be plastoquinone. Couples the redox reaction to proton translocation, and thus conserves the redox energy in a proton gradient. This chain is NAD(P)H-quinone oxidoreductase subunit 1, chloroplastic, found in Spinacia oleracea (Spinach).